The following is a 715-amino-acid chain: Polyribonucleotide nucleotidyltransferase (715 aa).

Mg(2+)-binding residues include Asp488 and Asp494. One can recognise a KH domain in the interval 555–614 (PKIETIKIPVDKIREVIGSGGKVIREIVEKTGAKIDIGEDGTIKIAAAEQTKIDAAKEWI). Residues 624-692 (GQIYTGKVVK…DRGKTRLSMK (69 aa)) enclose the S1 motif domain. The interval 692 to 715 (KVVDQETGEDLSKSNEKAEEPADA) is disordered. A compositionally biased stretch (basic and acidic residues) spans 701–715 (DLSKSNEKAEEPADA).

It belongs to the polyribonucleotide nucleotidyltransferase family. The cofactor is Mg(2+).

The protein localises to the cytoplasm. It carries out the reaction RNA(n+1) + phosphate = RNA(n) + a ribonucleoside 5'-diphosphate. Involved in mRNA degradation. Catalyzes the phosphorolysis of single-stranded polyribonucleotides processively in the 3'- to 5'-direction. This is Polyribonucleotide nucleotidyltransferase from Phenylobacterium zucineum (strain HLK1).